Reading from the N-terminus, the 327-residue chain is MDVVAGKALQVSDAVYSYQLDGKGGVTSISPDAVATAEQPCWLHLDYTHPDSAAWLQNTPLLPEVVRDGLAGESVRPKVTRLGDGTMITLRGINFNNDARPDQLVTIRVYMTDKLIVSTRHRKVYSIDDVLNDLQSGTGPTNSGNWLVEIVDGLTDHTSEFIEDLHDKIIDLEDDLLEQKIPARGQMALLRKQLIVLRRYMAPQRDVFSRLASERLPWMNDDDRRRMQEISERLGRGLEDLDSSIARTAVLSDEISSLMADAMNRRTYTMSLLAMVFLPTTFLTGLFGVNLGGIPGNTDSFGFATFCMMLVVLVLGVAWWLKHSKWL.

Topologically, residues 1-271 are cytoplasmic; the sequence is MDVVAGKALQ…AMNRRTYTMS (271 aa). The helical transmembrane segment at 272–292 threads the bilayer; that stretch reads LLAMVFLPTTFLTGLFGVNLG. The Periplasmic segment spans residues 293 to 300; it reads GIPGNTDS. Residues 301–321 traverse the membrane as a helical segment; sequence FGFATFCMMLVVLVLGVAWWL. Residues 322–327 lie on the Cytoplasmic side of the membrane; that stretch reads KHSKWL.

This sequence belongs to the CorA metal ion transporter (MIT) (TC 1.A.35) family.

The protein resides in the cell inner membrane. It catalyses the reaction Zn(2+)(out) + H(+)(out) = Zn(2+)(in) + H(+)(in). Functionally, zinc transporter. Acts as a Zn(2+):proton symporter, which likely mediates zinc ion uptake. The chain is Zinc transport protein ZntB from Yersinia enterocolitica serotype O:8 / biotype 1B (strain NCTC 13174 / 8081).